The following is a 94-amino-acid chain: MKYPKQIRTYCPYCKRHTIHKVERVKRRPRSELSAGQRRFRRVLKGYGGFPRPKPEGREKPVKKLDLRFVCTVCGRAHTRGKGFRVKRFELVEV.

Zn(2+)-binding residues include Cys-11, Cys-14, Cys-71, and Cys-74. Residues 11–74 (CPYCKRHTIH…LDLRFVCTVC (64 aa)) form a C4-type zinc finger.

Belongs to the eukaryotic ribosomal protein eL42 family. In terms of assembly, part of the 50S ribosomal subunit. Zn(2+) serves as cofactor.

Functionally, binds to the 23S rRNA. The protein is Large ribosomal subunit protein eL42 of Pyrococcus horikoshii (strain ATCC 700860 / DSM 12428 / JCM 9974 / NBRC 100139 / OT-3).